Here is a 414-residue protein sequence, read N- to C-terminus: Putative competence-damage inducible protein (414 aa).

Belongs to the CinA family.

This chain is Putative competence-damage inducible protein, found in Limosilactobacillus fermentum (strain NBRC 3956 / LMG 18251) (Lactobacillus fermentum).